A 49-amino-acid chain; its full sequence is Large ribosomal subunit protein bL33 (49 aa).

The protein belongs to the bacterial ribosomal protein bL33 family.

This Clostridium acetobutylicum (strain ATCC 824 / DSM 792 / JCM 1419 / IAM 19013 / LMG 5710 / NBRC 13948 / NRRL B-527 / VKM B-1787 / 2291 / W) protein is Large ribosomal subunit protein bL33.